The sequence spans 919 residues: Eukaryotic translation initiation factor 3 subunit C (919 aa).

Residues Met1–Ala28 are disordered. Residues Ser11–Val20 are compositionally biased toward acidic residues. A phosphoserine mark is found at Ser34, Ser165, and Ser177. Residues Leu154–Ala275 are disordered. The span at Gln162–Glu171 shows a compositional bias: acidic residues. Positions Ala210–Asn236 are enriched in acidic residues. Positions Met241 to Ile269 are enriched in basic and acidic residues. Positions Phe640 to Pro816 constitute a PCI domain. Residues Phe848–Glu919 form a disordered region. Residues Gln883 to Asn894 show a composition bias toward basic residues. Low complexity predominate over residues Gln895–Glu919.

It belongs to the eIF-3 subunit C family. As to quaternary structure, component of the eukaryotic translation initiation factor 3 (eIF-3) complex. The eIF-3 complex interacts with pix.

The protein resides in the cytoplasm. Component of the eukaryotic translation initiation factor 3 (eIF-3) complex, which is involved in protein synthesis of a specialized repertoire of mRNAs and, together with other initiation factors, stimulates binding of mRNA and methionyl-tRNAi to the 40S ribosome. The eIF-3 complex specifically targets and initiates translation of a subset of mRNAs involved in cell proliferation. This is Eukaryotic translation initiation factor 3 subunit C from Drosophila willistoni (Fruit fly).